The primary structure comprises 559 residues: Urocanate hydratase (559 aa).

NAD(+) is bound by residues 54–55 (GG), Gln-132, 178–180 (GMG), Glu-198, Arg-203, 244–245 (NA), 265–269 (QTSAH), 275–276 (YL), and Tyr-324. Cys-412 is an active-site residue. Gly-494 contacts NAD(+).

This sequence belongs to the urocanase family. NAD(+) serves as cofactor.

The protein resides in the cytoplasm. The enzyme catalyses 4-imidazolone-5-propanoate = trans-urocanate + H2O. The protein operates within amino-acid degradation; L-histidine degradation into L-glutamate; N-formimidoyl-L-glutamate from L-histidine: step 2/3. In terms of biological role, catalyzes the conversion of urocanate to 4-imidazolone-5-propionate. The polypeptide is Urocanate hydratase (Azotobacter vinelandii (strain DJ / ATCC BAA-1303)).